The following is a 440-amino-acid chain: MDDLYLHFVQQLARYPFRKILLALSGGVDSQVLLALLARGRDEFGWDVTAVHVHHGLSPNADQWAQHCQRCCREVGMACQIEYVQLDVASGESIEKLAREARYRVLAPHVNAQTLLLLGQHADDQLETFLLALKRGSGPKGLAAMAAYAPFAEGHLLRPLLTVSRQHIEAYAKQHKLTWVIDESNADIRYERNFLRHQVTPVLTERWPSIRQAVQRSAELCAEQEALLQEFLAEALKKAITAEGGLSIAVLAEGSEGMRRQLIRAWFAHHRLPMPSRQHTERIWCEVALASEDANPKLKLNHIEVRRFQHCLYLVPPEKDLSGWRSALVPEQRLPLPQGLGHLQLTSKAGGNIKLPDDPSQLWVSFEPQGLEACPVGRVGSRKLKKLFQEYGVPSWRRRQTPILMYQNRVVCVADLFVDRDWSGQDCELVWFKSHDSVPK.

Position 25 to 30 (25 to 30 (SGGVDS)) interacts with ATP.

Belongs to the tRNA(Ile)-lysidine synthase family.

The protein localises to the cytoplasm. The enzyme catalyses cytidine(34) in tRNA(Ile2) + L-lysine + ATP = lysidine(34) in tRNA(Ile2) + AMP + diphosphate + H(+). In terms of biological role, ligates lysine onto the cytidine present at position 34 of the AUA codon-specific tRNA(Ile) that contains the anticodon CAU, in an ATP-dependent manner. Cytidine is converted to lysidine, thus changing the amino acid specificity of the tRNA from methionine to isoleucine. This chain is tRNA(Ile)-lysidine synthase, found in Vibrio cholerae serotype O1 (strain ATCC 39541 / Classical Ogawa 395 / O395).